The following is a 243-amino-acid chain: NEDD4-binding protein 2-like 1 (243 aa).

The tract at residues 1 to 38 (MEDSFLQSFGRLSLQPQQQQQRQRPPRPPPRGTPPRRH) is disordered.

As to quaternary structure, interacts with dynactin subunit proteins, including DCTN4, DCTN5 and DCTN5.

Its function is as follows. Might play a role in adipocyte differentiation and triglyceride accumulation. The polypeptide is NEDD4-binding protein 2-like 1 (N4BP2L1) (Homo sapiens (Human)).